The sequence spans 181 residues: Small ribosomal subunit protein uS4 (181 aa).

The S4 RNA-binding domain maps to 104–172; it reads RRLQTIVYKK…SRPPVMSQQE (69 aa).

This sequence belongs to the universal ribosomal protein uS4 family. As to quaternary structure, part of the 30S ribosomal subunit. Contacts protein S5. The interaction surface between S4 and S5 is involved in control of translational fidelity.

In terms of biological role, one of the primary rRNA binding proteins, it binds directly to 16S rRNA where it nucleates assembly of the body of the 30S subunit. Functionally, with S5 and S12 plays an important role in translational accuracy. This chain is Small ribosomal subunit protein uS4, found in Saccharolobus solfataricus (strain ATCC 35092 / DSM 1617 / JCM 11322 / P2) (Sulfolobus solfataricus).